The following is a 144-amino-acid chain: MQDLNALLERSLGQLGYELVDMELANRGKLIRLFIDKPEGINIDDCVLVSNHLSNLLAVEHDIDYDRLEISSPGLDRVLKKTSDFVRFAGERAQVKLRMPIEGRKNFLGILRGVDQEYLVLECDGVEQRVPFSNIDKARLSPEF.

This sequence belongs to the RimP family.

It is found in the cytoplasm. Required for maturation of 30S ribosomal subunits. This is Ribosome maturation factor RimP from Methylobacillus flagellatus (strain ATCC 51484 / DSM 6875 / VKM B-1610 / KT).